The chain runs to 116 residues: Large ribosomal subunit protein uL22c (116 aa).

This sequence belongs to the universal ribosomal protein uL22 family. As to quaternary structure, part of the 50S ribosomal subunit.

The protein localises to the plastid. It localises to the chloroplast. Its function is as follows. This protein binds specifically to 23S rRNA. The globular domain of the protein is located near the polypeptide exit tunnel on the outside of the subunit, while an extended beta-hairpin is found that lines the wall of the exit tunnel in the center of the 70S ribosome. The chain is Large ribosomal subunit protein uL22c (rpl22) from Euglena gracilis.